Here is a 320-residue protein sequence, read N- to C-terminus: Sensor histidine kinase YbdK (320 aa).

A helical membrane pass occupies residues 1–21 (MLLFTAVISVPMLLLAVSVLM). Topologically, residues 22–41 (SVIYDSMFKPMNHGMPFHRS) are extracellular. Residues 42 to 62 (FAYPAMIVVFLISLLLLAFLF) traverse the membrane as a helical segment. Residues 63–320 (SKSIHSLLHK…NGTGFLFSKE (258 aa)) lie on the Cytoplasmic side of the membrane. Residues 67–120 (HSLLHKINLLNQTIRHLASDQRVPDKIEVKRADEIGELIKSVNLLIERTTYREL) enclose the HAMP domain. The Histidine kinase domain occupies 135-320 (KLRHDINTPL…NGTGFLFSKE (186 aa)). The residue at position 138 (His-138) is a Phosphohistidine; by autocatalysis.

It is found in the cell membrane. The enzyme catalyses ATP + protein L-histidine = ADP + protein N-phospho-L-histidine.. Its function is as follows. Member of the two-component regulatory system YbdK/YbdJ. Probably activates YbdJ by phosphorylation. This chain is Sensor histidine kinase YbdK (ybdK), found in Bacillus subtilis (strain 168).